The primary structure comprises 64 residues: UPF0434 protein BOV_A0835 (64 aa).

Belongs to the UPF0434 family.

This Brucella ovis (strain ATCC 25840 / 63/290 / NCTC 10512) protein is UPF0434 protein BOV_A0835.